A 329-amino-acid polypeptide reads, in one-letter code: 4-hydroxythreonine-4-phosphate dehydrogenase (329 aa).

Substrate is bound by residues His136 and Thr137. Residues His166, His211, and His266 each contribute to the a divalent metal cation site. Substrate-binding residues include Lys274, Asn283, and Arg292.

It belongs to the PdxA family. In terms of assembly, homodimer. Zn(2+) serves as cofactor. It depends on Mg(2+) as a cofactor. Co(2+) is required as a cofactor.

Its subcellular location is the cytoplasm. It catalyses the reaction 4-(phosphooxy)-L-threonine + NAD(+) = 3-amino-2-oxopropyl phosphate + CO2 + NADH. Its pathway is cofactor biosynthesis; pyridoxine 5'-phosphate biosynthesis; pyridoxine 5'-phosphate from D-erythrose 4-phosphate: step 4/5. Functionally, catalyzes the NAD(P)-dependent oxidation of 4-(phosphooxy)-L-threonine (HTP) into 2-amino-3-oxo-4-(phosphooxy)butyric acid which spontaneously decarboxylates to form 3-amino-2-oxopropyl phosphate (AHAP). The sequence is that of 4-hydroxythreonine-4-phosphate dehydrogenase from Escherichia fergusonii (strain ATCC 35469 / DSM 13698 / CCUG 18766 / IAM 14443 / JCM 21226 / LMG 7866 / NBRC 102419 / NCTC 12128 / CDC 0568-73).